The sequence spans 1456 residues: MASQDRGSDRTSRRLTKKRKDGKKPMRDVSLDMPERFKDGDDAHEDVTAPKGNHTMSMNQSIFSMIARAGQQSNTDLGTMQEVDSGDSDDEGTRNVPYHILDGAARLSRLSTANDFQKTSGQTRDGKTEKGKHRRALSENKLLRSLPKLKIASRKDARSDGQGADQMSSSQFLPPRPSPEGSMPAPASSPPPPAAKGRVRPGDGIQMEKGRNVARKTRQRSPAAAATGEAPVSLAKRIQHIFEFAQEEEVISEYPCWLLQSILLQGYMYITQKHICFYAYIPKKHHDVSKTGYLSKRGRSKHNRYWFILRGDVLAYYTNPAELYFPRNRINLQYAISAEVLEPKRKGDEETSFVVTTDERTYQFKADSVASAREWVKSIQKVIFRTHNEGNSVKISLPIQNVLEIEESSILDFAETAKVRVIDNDETFAIDEYFFSFFTKGQDALNVLRIMINDNEHHQAAQKPVEPPSRALGQSDSGFMASTNAPSEVPHITENVRATLSPLTAPHVGRSSMSDISVRSSVDANRKNRDVRRSMDAGRTLRRWSLEGRRLSHEAHRSPSPSGHDKTHKGRVGDRSPKSPRATDSDSATFSLDPGTESSAAIQSMDDSTASASQILDRSDLFRAPVVSSPNAFSNGVNMSAHSQDTTRSSAPRPAYSKGTHPTTSPSIDPLSPGAPDGEYDTDAGGATRLSGSSSALQDIASYPLQKASGLAGFLRTRSKKMGNLLAAESMGYYEKVSGMLAGGRKHYNTAEGLETDDQVNVYEDDEDAAKATDNFREHFAFREDEVLQSSFFASLQRVLPNYGKIYISGRYFCFRSLMPTSKTKIILPMKDIENVNKEKGFRLGYYGLAIVIRGHEELFFEFGKAEYRDECAITVLRILENTKYLEDDQSSSSGVDSNDEAAKAEHDLLQQAREDNNVDKTKNLSEIVRAAADDRIPLIFDDPLASFVDFKPPEPLTIVCLTIGSRGDVQPYIALCKELLKEGHKPRIATHAEFEPWVRKHGIDFAPVDGNPAELMRICVEHGMFTYNFMKEANSKFRGWLDDVCSSSWRACQGADVLIESPSTMAGIHIAEALEIPYFRAFTMPWTRTRAYPHAFSVLEKKMGGGYNSITYITFDTIFWTAISGQINKWRRRELGLQNTSQSKMQASLRPFLYNFSPHVVPPPLDWPDWVRVTGYWFLDEADTYEPPADLVAFMDKARKDGKKLVYVGFGSIVIDDPAALTKTVVDSVLKADVRCVLSKGWSDRLETKDASKPEIPLPSEIFQIQSAPHDWLFKQMDAAVHHGGSGTTGASLRAGIPTIIKPFFGDQYFFAQRVEDMGVGVWLKKVNTSVFSRALWEVTNSQRMIVKARVLGQKIRKDNGTQVAIQTIYRELDRARSLVKKHAKLDGELSEEFEEDWTMVEDGEEIDVPHPFEVQQPVAGISQDASKMGGGSLVLGSMVLKGAQKRSPESAYRG.

The span at 1 to 12 (MASQDRGSDRTS) shows a compositional bias: basic and acidic residues. The segment at 1–229 (MASQDRGSDR…RSPAAAATGE (229 aa)) is disordered. The segment covering 13–22 (RRLTKKRKDG) has biased composition (basic residues). The segment covering 23 to 48 (KKPMRDVSLDMPERFKDGDDAHEDVT) has biased composition (basic and acidic residues). Polar residues-rich tracts occupy residues 54–63 (HTMSMNQSIF) and 109–123 (RLST…SGQT). One can recognise a GRAM 1 domain in the interval 236-283 (KRIQHIFEFAQEEEVISEYPCWLLQSILLQGYMYITQKHICFYAYIPK). The region spanning 287-384 (DVSKTGYLSK…WVKSIQKVIF (98 aa)) is the PH domain. 2 disordered regions span residues 500–612 (LSPL…TASA) and 631–691 (NAFS…TRLS). Positions 510–523 (RSSMSDISVRSSVD) are enriched in low complexity. Composition is skewed to basic and acidic residues over residues 524 to 536 (ANRK…RSMD), 544 to 557 (WSLE…EAHR), and 571 to 584 (RVGD…RATD). Composition is skewed to polar residues over residues 585–612 (SDSA…TASA) and 631–650 (NAFS…TRSS). The GRAM 2 domain maps to 774–840 (DNFREHFAFR…KDIENVNKEK (67 aa)). UDP-alpha-D-glucose contacts are provided by Ser-966, Arg-967, Asp-969, Ala-1269, His-1271, His-1284, Ser-1287, Gly-1288, Thr-1289, Asp-1308, and Gln-1309.

This sequence belongs to the glycosyltransferase 28 family.

It localises to the cytoplasm. Its subcellular location is the preautophagosomal structure membrane. It carries out the reaction a sterol + UDP-alpha-D-glucose = a sterol 3-beta-D-glucoside + UDP + H(+). The catalysed reaction is ergosterol + UDP-alpha-D-glucose = ergosteryl 3-beta-D-glucoside + UDP + H(+). In terms of biological role, sterol glycosyltransferase responsible for the glycosylation of ergosterol to form ergosterol-glucoside. The protein is Sterol 3-beta-glucosyltransferase of Leptosphaeria maculans (Blackleg fungus).